The primary structure comprises 290 residues: Hsp70 nucleotide exchange factor FES1 (290 aa).

S12 is subject to Phosphoserine. ARM repeat units follow at residues 13-57 (QGDK…NPEV), 76-116 (LDNA…TAVQ), 120-161 (DSQN…NLIR), 164-205 (KDIS…AYLS), 211-251 (ENII…HLIS), and 253-290 (GIKF…KYVL).

It belongs to the FES1 family. As to quaternary structure, interacts with the Hsp70 chaperones SSA1 and SSB1.

The protein resides in the cytoplasm. Functionally, involved in protein translation, propagation of [PSI+] prions, and polyamine tolerance. Functions as a nucleotide exchange factor (NEF), which accelerates the release of ADP, for the cytosolic Hsp70 chaperone SSA1 and the ribosome-associated Hsp70 chaperone SSB1. Required for fully efficient Hsp70-mediated folding of proteins. The polypeptide is Hsp70 nucleotide exchange factor FES1 (FES1) (Saccharomyces cerevisiae (strain ATCC 204508 / S288c) (Baker's yeast)).